A 60-amino-acid polypeptide reads, in one-letter code: Large ribosomal subunit protein bL32 (60 aa).

A compositionally biased stretch (basic residues) spans 1 to 16 (MAVPRRKTSPSRRGMR). The segment at 1-60 (MAVPRRKTSPSRRGMRRSADALKRPTYAEDKDSGELRRPHHLDLKTGMYKGRQVIKKKDA) is disordered. The span at 17 to 44 (RSADALKRPTYAEDKDSGELRRPHHLDL) shows a compositional bias: basic and acidic residues.

It belongs to the bacterial ribosomal protein bL32 family.

This is Large ribosomal subunit protein bL32 from Rhodopseudomonas palustris (strain BisB5).